The sequence spans 319 residues: Large ribosomal subunit protein eL8 (319 aa).

Position 87 is an N6-acetyllysine (lysine 87). Residue lysine 101 forms a Glycyl lysine isopeptide (Lys-Gly) (interchain with G-Cter in SUMO2) linkage. Position 150 is an N6-acetyllysine; alternate (lysine 150). A Glycyl lysine isopeptide (Lys-Gly) (interchain with G-Cter in SUMO2); alternate cross-link involves residue lysine 150. Lysine 178 participates in a covalent cross-link: Glycyl lysine isopeptide (Lys-Gly) (interchain with G-Cter in SUMO2). Lysine 270 carries the N6-acetyllysine modification. Lysine 298 is covalently cross-linked (Glycyl lysine isopeptide (Lys-Gly) (interchain with G-Cter in SUMO2)).

It belongs to the eukaryotic ribosomal protein eL8 family. Component of the large ribosomal subunit. Interacts with CRY1. Interacts with DICER1, AGO2, TARBP2, MOV10 and EIF6; they form a large RNA-induced silencing complex (RISC).

Its subcellular location is the cytoplasm. Functionally, component of the large ribosomal subunit. The ribosome is a large ribonucleoprotein complex responsible for the synthesis of proteins in the cell. In Oryctolagus cuniculus (Rabbit), this protein is Large ribosomal subunit protein eL8 (RPL7A).